Consider the following 516-residue polypeptide: Delta(24)-sterol reductase (516 aa).

The N-terminal stretch at Met1–Gly22 is a signal peptide. Topologically, residues Leu23–Arg31 are lumenal. Residues Trp32–Val52 traverse the membrane as a helical segment. Residues Arg53–His516 lie on the Cytoplasmic side of the membrane. The 177-residue stretch at Phe58 to Ala234 folds into the FAD-binding PCMH-type domain. Thr163 to Ser175 contributes to the FAD binding site.

It belongs to the FAD-binding oxidoreductase/transferase type 4 family. Interacts with DHCR7; this interaction regulates DHCR7 activity. The cofactor is FAD.

Its subcellular location is the endoplasmic reticulum membrane. It localises to the golgi apparatus membrane. The catalysed reaction is cholesterol + NADP(+) = desmosterol + NADPH + H(+). The enzyme catalyses lanosterol + NADPH + H(+) = 24,25-dihydrolanosterol + NADP(+). It catalyses the reaction 5alpha-cholest-8-en-3beta-ol + NADP(+) = zymosterol + NADPH + H(+). It functions in the pathway steroid biosynthesis; cholesterol biosynthesis. Functionally, catalyzes the reduction of the delta-24 double bond of sterol intermediates during cholesterol biosynthesis. In addition to its cholesterol-synthesizing activity, can protect cells from oxidative stress by reducing caspase 3 activity during apoptosis induced by oxidative stress. Also protects against amyloid-beta peptide-induced apoptosis. The protein is Delta(24)-sterol reductase (Dhcr24) of Rattus norvegicus (Rat).